We begin with the raw amino-acid sequence, 296 residues long: 4-diphosphocytidyl-2-C-methyl-D-erythritol kinase (296 aa).

Lys-22 is a catalytic residue. 105–115 (PMGGGLGGGSS) is an ATP binding site. Asp-147 is a catalytic residue.

This sequence belongs to the GHMP kinase family. IspE subfamily.

The enzyme catalyses 4-CDP-2-C-methyl-D-erythritol + ATP = 4-CDP-2-C-methyl-D-erythritol 2-phosphate + ADP + H(+). It participates in isoprenoid biosynthesis; isopentenyl diphosphate biosynthesis via DXP pathway; isopentenyl diphosphate from 1-deoxy-D-xylulose 5-phosphate: step 3/6. Functionally, catalyzes the phosphorylation of the position 2 hydroxy group of 4-diphosphocytidyl-2C-methyl-D-erythritol. This Photobacterium profundum (strain SS9) protein is 4-diphosphocytidyl-2-C-methyl-D-erythritol kinase.